Consider the following 806-residue polypeptide: Acetyl-CoA decarbonylase/synthase complex subunit alpha 1 (806 aa).

6 residues coordinate [4Fe-4S] cluster: C73, C76, C77, C79, C84, and C94. H117 is a binding site for CO. Residues H250, C278, and C323 each coordinate [Ni-4Fe-4S] cluster. 4Fe-4S ferredoxin-type domains follow at residues S406–A436 and F445–I475. [4Fe-4S] cluster-binding residues include C417, C420, C423, C427, C455, C458, C461, and C465. Positions 523, 552, and 587 each coordinate [Ni-4Fe-4S] cluster.

Belongs to the Ni-containing carbon monoxide dehydrogenase family. Heterotetramer of two alpha and two epsilon subunits. The ACDS complex is made up of alpha, epsilon, beta, gamma and delta subunits with a probable stoichiometry of (alpha(2)epsilon(2))(4)-beta(8)-(gamma(1)delta(1))(8). [4Fe-4S] cluster is required as a cofactor. The cofactor is [Ni-4Fe-4S] cluster.

It catalyses the reaction CO + 2 oxidized [2Fe-2S]-[ferredoxin] + H2O = 2 reduced [2Fe-2S]-[ferredoxin] + CO2 + 2 H(+). Its pathway is one-carbon metabolism; methanogenesis from acetate. In terms of biological role, part of the ACDS complex that catalyzes the reversible cleavage of acetyl-CoA, allowing growth on acetate as sole source of carbon and energy. The alpha-epsilon subcomponent functions as a carbon monoxide dehydrogenase. The polypeptide is Acetyl-CoA decarbonylase/synthase complex subunit alpha 1 (Methanosarcina mazei (strain ATCC BAA-159 / DSM 3647 / Goe1 / Go1 / JCM 11833 / OCM 88) (Methanosarcina frisia)).